The following is a 145-amino-acid chain: 3-dehydroquinate dehydratase (145 aa).

Tyr23 serves as the catalytic Proton acceptor. Substrate is bound by residues Asn74, His80, and Asp87. The Proton donor role is filled by His100. Substrate is bound by residues Leu101 to Ser102 and Arg111.

It belongs to the type-II 3-dehydroquinase family. In terms of assembly, homododecamer.

It carries out the reaction 3-dehydroquinate = 3-dehydroshikimate + H2O. It participates in metabolic intermediate biosynthesis; chorismate biosynthesis; chorismate from D-erythrose 4-phosphate and phosphoenolpyruvate: step 3/7. In terms of biological role, catalyzes a trans-dehydration via an enolate intermediate. The protein is 3-dehydroquinate dehydratase of Halalkalibacterium halodurans (strain ATCC BAA-125 / DSM 18197 / FERM 7344 / JCM 9153 / C-125) (Bacillus halodurans).